A 478-amino-acid polypeptide reads, in one-letter code: Catalase easC (478 aa).

His54 is an active-site residue. Tyr343 serves as a coordination point for heme. The tract at residues 459–478 is disordered; it reads VAEKARPDSPSRAQPGQLRL.

The protein belongs to the catalase family. The cofactor is heme.

It participates in alkaloid biosynthesis; ergot alkaloid biosynthesis. In terms of biological role, catalase; part of the gene cluster that mediates the biosynthesis of fungal ergot alkaloid. DmaW catalyzes the first step of ergot alkaloid biosynthesis by condensing dimethylallyl diphosphate (DMAP) and tryptophan to form 4-dimethylallyl-L-tryptophan. The second step is catalyzed by the methyltransferase easF that methylates 4-dimethylallyl-L-tryptophan in the presence of S-adenosyl-L-methionine, resulting in the formation of 4-dimethylallyl-L-abrine. The catalase easC and the FAD-dependent oxidoreductase easE then transform 4-dimethylallyl-L-abrine to chanoclavine-I which is further oxidized by easD in the presence of NAD(+), resulting in the formation of chanoclavine-I aldehyde. Chanoclavine-I aldehyde is the precursor of ergoamides and ergopeptines in Clavicipitaceae, and clavine-type alcaloids such as fumiclavine in Trichocomaceae. However, the metabolites downstream of chanoclavine-I aldehyde in Arthrodermataceae have not been identified yet. This chain is Catalase easC, found in Trichophyton verrucosum (strain HKI 0517).